Consider the following 184-residue polypeptide: Large ribosomal subunit protein uL6 (184 aa).

The protein belongs to the universal ribosomal protein uL6 family. As to quaternary structure, part of the 50S ribosomal subunit.

Its function is as follows. This protein binds to the 23S rRNA, and is important in its secondary structure. It is located near the subunit interface in the base of the L7/L12 stalk, and near the tRNA binding site of the peptidyltransferase center. This chain is Large ribosomal subunit protein uL6, found in Thermotoga neapolitana (strain ATCC 49049 / DSM 4359 / NBRC 107923 / NS-E).